We begin with the raw amino-acid sequence, 316 residues long: Actin patches distal protein 1 (316 aa).

The protein belongs to the APD1 family.

It is found in the cytoplasm. It localises to the nucleus. Functionally, required for normal localization of actin patches. Involved in tolerance to sodium ions and hydrogen peroxide. The polypeptide is Actin patches distal protein 1 (APD1) (Saccharomyces cerevisiae (strain ATCC 204508 / S288c) (Baker's yeast)).